The following is a 1418-amino-acid chain: Alpha-latrotoxin-Lhe1a (1418 aa).

Residues 1-20 (MIFVGETMERANHSLVRLRR) form the signal peptide. The furin-like endopeptidase recognition region stretch occupies residues 17 to 20 (RLRR). The tract at residues 238 to 257 (VLYALLYGTQTYISVMFFLL) is helix H8 is the probable transmembrane region of the tetrameric pore inserted in the target cell membrane. The cysteines at positions 413 and 1066 are disulfide-linked. ANK repeat units follow at residues 458–489 (LYNA…ATFD), 490–521 (QGRT…ELNQ), 525–554 (KGYT…SINS), 559–589 (FLQT…NINE), 593–622 (DGFT…DVNA), 626–656 (KGLT…DINA), 660–690 (NNMT…NANV), 695–723 (GLLS…NVNV), 729–758 (GGIT…NIEQ), 762–791 (EKYT…NFEA), 795–824 (SGAT…NWRD), 828–857 (NGQM…TVLD), 862–891 (NSDT…DINT), 895–924 (NGHA…NVYI), 928–957 (NGMN…KFEW), 971–1003 (EECA…GNFN), 1004–1033 (ICGP…SVDG), 1035–1064 (KTDT…KVNH), 1068–1097 (NGMT…DFRR), 1101–1131 (RGAT…DINI), 1137–1166 (DKET…DVTI), and 1170–1199 (YDKT…KFRR). Positions 1026 to 1032 (EEVLSVD) are 4C4.1 epitope. The tract at residues 1196 to 1199 (KFRR) is furin-like endopeptidase recognition region. The propeptide occupies 1200–1418 (EYKSSYGEHS…SEKKIQKISI (219 aa)).

Belongs to the cationic peptide 01 (latrotoxin) family. 03 (alpha-latrotoxin) subfamily. In terms of assembly, homotetramer in membranes. In terms of processing, processed by furin-like proteases at both the N- and C-termini. Expressed in venom gland, cephalothorax, and abdomen tissues from both males and females.

The protein localises to the secreted. It localises to the target cell membrane. Its function is as follows. Presynaptic neurotoxin that causes massive release of neurotransmitters from vertebrate (but not invertebrate) nerve terminals and endocrine cells via a complex mechanism involving activation of receptor(s) and toxin insertion into the plasma membrane with subsequent pore formation. Binds to neurexin-1-alpha (NRXN1) in a calcium dependent manner, adhesion G protein-coupled receptor L1 (ADGRL1, also termed latrophilin-1 and calcium-independent receptor of latrotoxin (CIRL)), and receptor-type tyrosine-protein phosphatase S (PTPRS), also termed PTP sigma. NRXN1 and PTPRS are suggested to provide a platform for binding and subsequent pore formation events. In contrast, binding to ADGRL1 does not involve oligomerization and channel formation, but direct downstream stimulation of the synaptic fusion machinery. The chain is Alpha-latrotoxin-Lhe1a from Latrodectus hesperus (Western black widow spider).